The sequence spans 189 residues: Riboflavin transporter RibU (189 aa).

Topologically, residues 1–9 are cytoplasmic; that stretch reads MNGRRKLNM. Residues 10-29 traverse the membrane as a helical segment; sequence QQNKRLITISMLSAIAFVLT. At 30 to 44 the chain is on the periplasmic side; that stretch reads FIKFPIPFLPPYLTL. The helical intramembrane region spans 45-56; that stretch reads DFSDVPSLLATF. Topologically, residues 57 to 58 are cytoplasmic; that stretch reads TF. The chain crosses the membrane as a helical span at residues 59 to 78; it reads GPVAGIIVALVKNLLNYLFS. The Periplasmic portion of the chain corresponds to 79-82; sequence MGDP. A helical transmembrane segment spans residues 83–104; that stretch reads VGPFANFLAGASFLLTAYAIYK. At 105 to 107 the chain is on the cytoplasmic side; the sequence is NKR. A helical membrane pass occupies residues 108–132; that stretch reads STKSLITGLIIATIVMTIVLSILNY. The Periplasmic portion of the chain corresponds to 133–159; that stretch reads FVLLPLYGMIFNLADIANNLKVIIVSG. A helical membrane pass occupies residues 160 to 182; it reads IIPFNIIKGIVISIVFILLYRRL. Residues 183 to 189 are Cytoplasmic-facing; the sequence is ANFLKRI.

It belongs to the prokaryotic riboflavin transporter (P-RFT) (TC 2.A.87) family. In terms of assembly, forms a stable energy-coupling factor (ECF) transporter complex composed of a membrane-embedded substrate-binding protein (S component), 2 ATP-binding proteins (A component) and 2 transmembrane proteins (T component). May be able to interact with more than 1 S component at a time.

The protein localises to the cell membrane. Its function is as follows. Mediates riboflavin uptake, may also transport FMN and roseoflavin. Probably a riboflavin-binding protein that interacts with the energy-coupling factor (ECF) ABC-transporter complex. Unlike classic ABC transporters this ECF transporter provides the energy necessary to transport a number of different substrates. The substrates themselves are bound by transmembrane, not extracytoplasmic soluble proteins. The polypeptide is Riboflavin transporter RibU (ribU) (Staphylococcus aureus (strain TCH60)).